The chain runs to 138 residues: ATP synthase subunit g, mitochondrial (138 aa).

Belongs to the ATPase g subunit family. F-type ATP synthases have 2 components, the catalytic core F(1) and the membrane-embedded component F(0), linked together by a central stalk and a peripheral stalk. The central stalk, also called rotor shaft, is often seen as part of F(1). The peripheral stalk is seen as part of F(0). F(0) contains the membrane channel next to the rotor. F-type ATP synthases form dimers but each monomer functions independently in ATP generation. The dimer consists of 17 different polypeptides: ATP1 (subunit alpha, 3 molecules per monomer, part of F(1)), ATP2 (subunit beta, 3 copies per monomer, part of F(1)), ATP3 (subunit gamma, part of the central stalk), ATP4 (subunit b, part of the peripheral stalk), ATP5/OSCP (subunit 5/OSCP, part of the peripheral stalk), ATP6 (subunit a, part of the peripheral stalk), ATP7 (subunit d, part of the peripheral stalk), ATP8 (subunit 8, part of the peripheral stalk), OLI1 (subunit c, part of the rotor, 10 molecules per monomer), ATP14 (subunit h, part of the peripheral stalk), ATP15 (subunit epsilon, part of the central stalk), ATP16 (subunit delta, part of the central stalk), ATP17 (subunit f, part of the peripheral stalk), ATP18 (subunit i/j, part of the peripheral stalk), ATP19 (subunit k, dimer-specific, at interface between monomers), ATP20 (subunit g, at interface between monomers), TIM11 (subunit e, at interface between monomers).

It localises to the mitochondrion inner membrane. Its function is as follows. Mitochondrial membrane ATP synthase (F(1)F(0) ATP synthase or Complex V) produces ATP from ADP in the presence of a proton gradient across the membrane which is generated by electron transport complexes of the respiratory chain. F-type ATP synthases consist of two structural domains, F(1) - containing the extramembraneous catalytic core, and F(0) - containing the membrane proton channel, linked together by a central stalk and a peripheral stalk. During catalysis, ATP synthesis in the catalytic domain of F(1) is coupled via a rotary mechanism of the central stalk subunits to proton translocation. Part of the complex F(0) domain. Minor subunit located with subunit a/ATP6 in the membrane. Together with subunit e/TIM11, probably contributes to membrane curvature at the site of the ATP synthase dimer, ultimately contributing to formation of cristae. The protein is ATP synthase subunit g, mitochondrial of Yarrowia lipolytica (strain CLIB 122 / E 150) (Yeast).